A 529-amino-acid polypeptide reads, in one-letter code: Phosphoenolpyruvate carboxykinase (ATP) (529 aa).

3 residues coordinate substrate: arginine 60, tyrosine 195, and lysine 201. Residues lysine 201, histidine 220, and 236-244 contribute to the ATP site; that span reads GLSGTGKTT. Mn(2+) is bound by residues lysine 201 and histidine 220. Residue aspartate 257 participates in Mn(2+) binding. Positions 285, 323, and 448 each coordinate ATP. Arginine 323 lines the substrate pocket.

This sequence belongs to the phosphoenolpyruvate carboxykinase (ATP) family. Mn(2+) serves as cofactor.

The protein resides in the cytoplasm. It carries out the reaction oxaloacetate + ATP = phosphoenolpyruvate + ADP + CO2. The protein operates within carbohydrate biosynthesis; gluconeogenesis. Functionally, involved in the gluconeogenesis. Catalyzes the conversion of oxaloacetate (OAA) to phosphoenolpyruvate (PEP) through direct phosphoryl transfer between the nucleoside triphosphate and OAA. The sequence is that of Phosphoenolpyruvate carboxykinase (ATP) from Geobacter sp. (strain M21).